The following is a 477-amino-acid chain: Aspartyl/glutamyl-tRNA(Asn/Gln) amidotransferase subunit B (477 aa).

The protein belongs to the GatB/GatE family. GatB subfamily. In terms of assembly, heterotrimer of A, B and C subunits.

It carries out the reaction L-glutamyl-tRNA(Gln) + L-glutamine + ATP + H2O = L-glutaminyl-tRNA(Gln) + L-glutamate + ADP + phosphate + H(+). The enzyme catalyses L-aspartyl-tRNA(Asn) + L-glutamine + ATP + H2O = L-asparaginyl-tRNA(Asn) + L-glutamate + ADP + phosphate + 2 H(+). Allows the formation of correctly charged Asn-tRNA(Asn) or Gln-tRNA(Gln) through the transamidation of misacylated Asp-tRNA(Asn) or Glu-tRNA(Gln) in organisms which lack either or both of asparaginyl-tRNA or glutaminyl-tRNA synthetases. The reaction takes place in the presence of glutamine and ATP through an activated phospho-Asp-tRNA(Asn) or phospho-Glu-tRNA(Gln). The sequence is that of Aspartyl/glutamyl-tRNA(Asn/Gln) amidotransferase subunit B from Coxiella burnetii (strain CbuG_Q212) (Coxiella burnetii (strain Q212)).